We begin with the raw amino-acid sequence, 440 residues long: Streptokinase (440 aa).

Residues 1–26 (MKNYLSFGMFALLFALTFGTVKPVQA) form the signal peptide. The disordered stretch occupies residues 72–94 (PAQGGKTEQGLRPKSKPLATDKG).

Functionally, this protein is not a protease, but it activates plasminogen by complexing with it. As a potential virulence factor, it is thought to prevent the formation of effective fibrin barriers around the site of infection, thereby contributing to the invasiveness of the cells. The protein is Streptokinase (ska) of Streptococcus pyogenes.